The primary structure comprises 847 residues: Pep5-like zinc finger protein C16A10.03c (847 aa).

A CHCR repeat occupies 387-526 (YIEAIPFSDS…GIWLFNSDPM (140 aa)). The RING-type; atypical zinc-finger motif lies at 780-814 (CDNCEGLLDVPFVSYSCLHLVHRDCATETVCPKCK).

The protein localises to the cytoplasm. It is found in the nucleus. This chain is Pep5-like zinc finger protein C16A10.03c, found in Schizosaccharomyces pombe (strain 972 / ATCC 24843) (Fission yeast).